Consider the following 22-residue polypeptide: Piscidin-3 (22 aa).

Gly22 bears the Glycine amide mark.

The protein belongs to the pleurocidin family. In terms of tissue distribution, mast cells in gill, skin and gut, and in lining blood vessels in the viscera.

It localises to the secreted. It is found in the membrane. Functionally, antimicrobial peptide with broad-spectrum activity against Gram-positive and Gram-negative bacteria. Rapidly inactivates both channel catfish herpesvirus (ED(50)=11 uM) and frog virus 3 (ED(50)=16 uM) over a wide temperature range. Has hemolytic activity. The chain is Piscidin-3 from Morone chrysops x Morone saxatilis (White bass x Striped bass).